Reading from the N-terminus, the 249-residue chain is Metallo-beta-lactamase type 2 (249 aa).

Positions 1–22 are cleaved as a signal peptide; sequence MLKRLKGLLVLALGFTGLQVFG. Zn(2+) is bound by residues histidine 98, histidine 100, aspartate 102, histidine 161, and cysteine 180. Lysine 183 lines the substrate pocket. Histidine 222 provides a ligand contact to Zn(2+).

The protein belongs to the metallo-beta-lactamase superfamily. Class-B beta-lactamase family. In terms of assembly, monomer. Zn(2+) is required as a cofactor.

It localises to the periplasm. The enzyme catalyses a beta-lactam + H2O = a substituted beta-amino acid. In terms of biological role, confers resistance to the different beta-lactams antibiotics (penicillin, cephalosporin and carbapenem) via the hydrolysis of the beta-lactam ring. The protein is Metallo-beta-lactamase type 2 (blaB5) of Elizabethkingia meningoseptica (Chryseobacterium meningosepticum).